The sequence spans 1059 residues: Disks large-associated protein 2 (1059 aa).

Disordered stretches follow at residues 31 to 54 (GEPE…PAEE) and 245 to 311 (KSHS…SDST). Residues 245–261 (KSHSLEGSSKSNINGTK) show a composition bias toward polar residues. Positions 262-271 (SDSRVDDHHQ) are enriched in basic and acidic residues. The segment covering 272 to 285 (SHLSKHSKRSKSKE) has biased composition (basic residues). A phosphoserine mark is found at Ser302, Ser308, Ser390, and Ser456. Positions 613–669 (YKKTPPPVPPRTTSKPLISVTAQSSTESTQDAYQDSRAQRMSPWPQDSRGGLYNSMD) are disordered. The segment covering 632–645 (VTAQSSTESTQDAY) has biased composition (polar residues). Phosphoserine occurs at positions 667, 670, 673, and 720. Positions 723–756 (VQDSEFPDHQPYPRSDVETATDSDTESRGLREYH) are disordered. Thr743 carries the post-translational modification Phosphothreonine. Residue Ser745 is modified to Phosphoserine. Positions 747–756 (TESRGLREYH) are enriched in basic and acidic residues. Phosphoserine is present on residues Ser776, Ser811, Ser983, and Ser1012. The interval 985 to 1025 (ERKEERKIPPPIPKKPPKGKFPITREKSLDLPDRQRQEARR) is disordered. Basic and acidic residues predominate over residues 1007–1025 (ITREKSLDLPDRQRQEARR).

It belongs to the SAPAP family. Interacts with DLG4/PSD-95. As to expression, expressed in various brain areas.

The protein localises to the cell membrane. It is found in the postsynaptic density. It localises to the synapse. Functionally, may play a role in the molecular organization of synapses and neuronal cell signaling. Could be an adapter protein linking ion channel to the subsynaptic cytoskeleton. May induce enrichment of PSD-95/SAP90 at the plasma membrane. This Mus musculus (Mouse) protein is Disks large-associated protein 2.